The chain runs to 167 residues: Small ribosomal subunit protein uS5 (167 aa).

The 64-residue stretch at 12–75 (LQEKLITVNR…EQARRNMITI (64 aa)) folds into the S5 DRBM domain.

The protein belongs to the universal ribosomal protein uS5 family. In terms of assembly, part of the 30S ribosomal subunit. Contacts proteins S4 and S8.

Functionally, with S4 and S12 plays an important role in translational accuracy. In terms of biological role, located at the back of the 30S subunit body where it stabilizes the conformation of the head with respect to the body. In Buchnera aphidicola subsp. Acyrthosiphon pisum (strain APS) (Acyrthosiphon pisum symbiotic bacterium), this protein is Small ribosomal subunit protein uS5.